We begin with the raw amino-acid sequence, 373 residues long: Lipoyl amidotransferase LIPT1, mitochondrial (373 aa).

The transit peptide at M1–K25 directs the protein to the mitochondrion. Residues L57–N243 enclose the BPL/LPL catalytic domain. Y107, R151, K161, and T179 together coordinate (R)-lipoyl-5'-AMP.

Belongs to the LplA family. Highly expressed in skeletal muscle and heart, moderately in kidney and pancreas, and detected at lower levels in liver, brain, placenta and lung.

The protein resides in the mitochondrion. It carries out the reaction N(6)-[(R)-lipoyl]-L-lysyl-[glycine-cleavage complex H protein] + L-lysyl-[lipoyl-carrier protein] = L-lysyl-[glycine-cleavage complex H protein] + N(6)-[(R)-lipoyl]-L-lysyl-[lipoyl-carrier protein]. It catalyses the reaction (R)-lipoyl-5'-AMP + L-lysyl-[lipoyl-carrier protein] = N(6)-[(R)-lipoyl]-L-lysyl-[lipoyl-carrier protein] + AMP + 2 H(+). The protein operates within protein modification; protein lipoylation via exogenous pathway; protein N(6)-(lipoyl)lysine from lipoate: step 2/2. In terms of biological role, lipoyl amidotransferase that catalyzes the transfer of lipoyl moieties from lipoyl-protein H of the glycine cleavage system (lipoyl-GCSH) to E2 subunits of the pyruvate dehydrogenase complex (PDCE2). Unable to catalyze the transfer of octanoyl from octanoyl-GCSH to PDCE2. In vitro, it is also able to catalyze the transfer of the lipoyl group from lipoyl-AMP to the specific lysine residue of lipoyl domains of lipoate-dependent enzymes but this reaction may not be physiologically relevant. The polypeptide is Lipoyl amidotransferase LIPT1, mitochondrial (Homo sapiens (Human)).